A 203-amino-acid chain; its full sequence is Small ribosomal subunit protein uS4 (203 aa).

In terms of domain architecture, S4 RNA-binding spans 93–153 (RRLDNIVYRL…DKSKNLQQVK (61 aa)).

It belongs to the universal ribosomal protein uS4 family. In terms of assembly, part of the 30S ribosomal subunit. Contacts protein S5. The interaction surface between S4 and S5 is involved in control of translational fidelity.

Functionally, one of the primary rRNA binding proteins, it binds directly to 16S rRNA where it nucleates assembly of the body of the 30S subunit. In terms of biological role, with S5 and S12 plays an important role in translational accuracy. This chain is Small ribosomal subunit protein uS4, found in Lactobacillus gasseri (strain ATCC 33323 / DSM 20243 / BCRC 14619 / CIP 102991 / JCM 1131 / KCTC 3163 / NCIMB 11718 / NCTC 13722 / AM63).